The chain runs to 126 residues: Large ribosomal subunit protein uL14m (126 aa).

It belongs to the universal ribosomal protein uL14 family. As to quaternary structure, component of the mitochondrial large ribosomal subunit (mt-LSU). Mature yeast 74S mitochondrial ribosomes consist of a small (37S) and a large (54S) subunit. The 37S small subunit contains a 15S ribosomal RNA (15S mt-rRNA) and at least 32 different proteins. The 54S large subunit contains a 21S rRNA (21S mt-rRNA) and at least 45 different proteins.

It is found in the mitochondrion. Functionally, component of the mitochondrial ribosome (mitoribosome), a dedicated translation machinery responsible for the synthesis of mitochondrial genome-encoded proteins, including at least some of the essential transmembrane subunits of the mitochondrial respiratory chain. The mitoribosomes are attached to the mitochondrial inner membrane and translation products are cotranslationally integrated into the membrane. The polypeptide is Large ribosomal subunit protein uL14m (mrpl38) (Schizosaccharomyces pombe (strain 972 / ATCC 24843) (Fission yeast)).